A 396-amino-acid chain; its full sequence is Tryptophan synthase beta chain (396 aa).

The residue at position 86 (lysine 86) is an N6-(pyridoxal phosphate)lysine.

It belongs to the TrpB family. In terms of assembly, tetramer of two alpha and two beta chains. Requires pyridoxal 5'-phosphate as cofactor.

It catalyses the reaction (1S,2R)-1-C-(indol-3-yl)glycerol 3-phosphate + L-serine = D-glyceraldehyde 3-phosphate + L-tryptophan + H2O. The protein operates within amino-acid biosynthesis; L-tryptophan biosynthesis; L-tryptophan from chorismate: step 5/5. The beta subunit is responsible for the synthesis of L-tryptophan from indole and L-serine. The chain is Tryptophan synthase beta chain from Francisella tularensis subsp. novicida (strain U112).